Here is a 446-residue protein sequence, read N- to C-terminus: Phosphoglucosamine mutase (446 aa).

Ser101 (phosphoserine intermediate) is an active-site residue. Residues Ser101, Asp240, Asp242, and Asp244 each contribute to the Mg(2+) site. The residue at position 101 (Ser101) is a Phosphoserine.

The protein belongs to the phosphohexose mutase family. Requires Mg(2+) as cofactor. In terms of processing, activated by phosphorylation.

It catalyses the reaction alpha-D-glucosamine 1-phosphate = D-glucosamine 6-phosphate. In terms of biological role, catalyzes the conversion of glucosamine-6-phosphate to glucosamine-1-phosphate. The polypeptide is Phosphoglucosamine mutase (Pseudomonas putida (strain ATCC 700007 / DSM 6899 / JCM 31910 / BCRC 17059 / LMG 24140 / F1)).